Here is a 111-residue protein sequence, read N- to C-terminus: MPKVLFLPHKILLPKSIECEAQTGETILTVALRNNIKLEHACEQSCACSTCHCIIKKGFFSLSGWSEKEDDILDKAWGLQSESRLSCQAVIGKSDIEVEIPLYNLNYTVEY.

The 2Fe-2S ferredoxin-type domain occupies 1 to 104 (MPKVLFLPHK…DIEVEIPLYN (104 aa)). Cys42, Cys48, Cys51, and Cys87 together coordinate [2Fe-2S] cluster.

The protein belongs to the adrenodoxin/putidaredoxin family. [2Fe-2S] cluster is required as a cofactor.

Ferredoxin are iron-sulfur proteins that transfer electrons in a wide variety of metabolic reactions. The protein is 2Fe-2S ferredoxin (fdx) of Buchnera aphidicola subsp. Acyrthosiphon pisum (strain APS) (Acyrthosiphon pisum symbiotic bacterium).